A 216-amino-acid chain; its full sequence is Orotidine 5'-phosphate decarboxylase (216 aa).

Residues aspartate 12, lysine 34, 62–71 (DFKVADIDAT), serine 119, 172–182 (PGVGFQGGNAK), glycine 194, and arginine 195 contribute to the substrate site. The Proton donor role is filled by lysine 64.

The protein belongs to the OMP decarboxylase family. Type 1 subfamily. In terms of assembly, homodimer.

The enzyme catalyses orotidine 5'-phosphate + H(+) = UMP + CO2. The protein operates within pyrimidine metabolism; UMP biosynthesis via de novo pathway; UMP from orotate: step 2/2. Its function is as follows. Catalyzes the decarboxylation of orotidine 5'-monophosphate (OMP) to uridine 5'-monophosphate (UMP). This is Orotidine 5'-phosphate decarboxylase from Methanosphaera stadtmanae (strain ATCC 43021 / DSM 3091 / JCM 11832 / MCB-3).